A 323-amino-acid chain; its full sequence is Aspartate carbamoyltransferase catalytic subunit (323 aa).

Positions 55 and 56 each coordinate carbamoyl phosphate. Lys83 lines the L-aspartate pocket. 3 residues coordinate carbamoyl phosphate: Arg105, His138, and Gln141. L-aspartate-binding residues include Arg181 and Arg235. Carbamoyl phosphate contacts are provided by Gly276 and Pro277.

It belongs to the aspartate/ornithine carbamoyltransferase superfamily. ATCase family. Heterododecamer (2C3:3R2) of six catalytic PyrB chains organized as two trimers (C3), and six regulatory PyrI chains organized as three dimers (R2).

The catalysed reaction is carbamoyl phosphate + L-aspartate = N-carbamoyl-L-aspartate + phosphate + H(+). Its pathway is pyrimidine metabolism; UMP biosynthesis via de novo pathway; (S)-dihydroorotate from bicarbonate: step 2/3. Catalyzes the condensation of carbamoyl phosphate and aspartate to form carbamoyl aspartate and inorganic phosphate, the committed step in the de novo pyrimidine nucleotide biosynthesis pathway. The polypeptide is Aspartate carbamoyltransferase catalytic subunit (Corynebacterium aurimucosum (strain ATCC 700975 / DSM 44827 / CIP 107346 / CN-1) (Corynebacterium nigricans)).